A 38-amino-acid chain; its full sequence is Large ribosomal subunit protein bL36 (38 aa).

It belongs to the bacterial ribosomal protein bL36 family.

This is Large ribosomal subunit protein bL36 from Lactobacillus johnsonii (strain CNCM I-12250 / La1 / NCC 533).